Here is a 329-residue protein sequence, read N- to C-terminus: SLAM family member 5 (329 aa).

Positions 1-21 (MAQRHLWIWFLCLQTWSEAAG) are cleaved as a signal peptide. Topologically, residues 22–221 (KDADPMVMNG…TPSFHPRHAV (200 aa)) are extracellular. Residues 26–129 (PMVMNGILGE…IYYLHIYRRL (104 aa)) form the Ig-like V-type domain. The 75-residue stretch at 132 to 206 (PKITQSLISS…SNSSDSVTVQ (75 aa)) folds into the Ig-like C2-type domain. Asn147 carries N-linked (GlcNAc...) asparagine glycosylation. A disulfide bridge links Cys152 with Cys190. Residues 222-242 (LPGGLAVLFLLILIPMLAFLF) form a helical membrane-spanning segment. At 243-329 (RLYKRRRDRI…PKALGNEIVV (87 aa)) the chain is on the cytoplasmic side. Positions 263–268 (TVYAVV) match the ITSM 1 motif. Tyr265 is modified (phosphotyrosine). A Phosphotyrosine; by LYN modification is found at Tyr280. The ITSM 2 signature appears at 298–303 (TIYSSV). Tyr300 is modified (phosphotyrosine).

Homodimer; via its extracellular domain. Forms a head to tail dimer with a CD48 molecule from another cell. Interacts with SH2 domain-containing proteins SH2D1A/SAP and SH2D1B/EAT-2. Interacts with tyrosine-protein phosphatases PTPN6/SHP-1 and PTPN11/SHP-2 via its phosphorylated cytoplasmic domain, and this interaction is blocked by SH2D1A. In terms of processing, phosphorylated by tyrosine-protein kinase LCK on tyrosine residues following ligation induced by agonist monoclonal antibody. The association with SH2D1A/SAP is dependent of tyrosine phosphorylation of its cytoplasmic domain. Phosphorylated on Tyr-280 and Tyr-300 following platelet aggregation. Phosphorylated on tyrosine residues upon high affinity immunoglobulin epsilon receptor aggregation in mast cells. N-glycosylated. Predominantly expressed in hematopoietic tissues such as lymph node, spleen, thymus, and bone marrow. Detected also in lung.

It is found in the cell membrane. In terms of biological role, self-ligand receptor of the signaling lymphocytic activation molecule (SLAM) family. SLAM receptors triggered by homo- or heterotypic cell-cell interactions are modulating the activation and differentiation of a wide variety of immune cells and thus are involved in the regulation and interconnection of both innate and adaptive immune response. Activities are controlled by presence or absence of small cytoplasmic adapter proteins, SH2D1A/SAP and/or SH2D1B/EAT-2. Can mediate natural killer (NK) cell cytotoxicity dependent on SH2D1A and SH2D1B. Increases proliferative responses of activated T-cells and SH2D1A/SAP does not seen be required for this process. Homophilic interactions enhance interferon gamma/IFNG secretion in lymphocytes and induce platelet stimulation via a SH2D1A/SAP-dependent pathway. May serve as a marker for hematopoietic progenitor cells. Required for a prolonged T-cell:B-cell contact, optimal T follicular helper function, and germinal center formation. In germinal centers involved in maintaining B cell tolerance and in preventing autoimmunity. In mast cells negatively regulates high affinity immunoglobulin epsilon receptor signaling; independent of SH2D1A and SH2D1B but implicating FES and PTPN6/SHP-1. In macrophages enhances LPS-induced MAPK phosphorylation and NF-kappaB activation and modulates LPS-induced cytokine secretion; involving ITSM 2. Positively regulates macroautophagy in primary dendritic cells via stabilization of IRF8; inhibits TRIM21-mediated proteasomal degradation of IRF8. This Mus musculus (Mouse) protein is SLAM family member 5 (Cd84).